The following is a 156-amino-acid chain: ATP synthase subunit b (156 aa).

A helical membrane pass occupies residues 11 to 31 (AIAFVLFVLFCMKYVWPPLMA).

It belongs to the ATPase B chain family. F-type ATPases have 2 components, F(1) - the catalytic core - and F(0) - the membrane proton channel. F(1) has five subunits: alpha(3), beta(3), gamma(1), delta(1), epsilon(1). F(0) has three main subunits: a(1), b(2) and c(10-14). The alpha and beta chains form an alternating ring which encloses part of the gamma chain. F(1) is attached to F(0) by a central stalk formed by the gamma and epsilon chains, while a peripheral stalk is formed by the delta and b chains.

The protein resides in the cell inner membrane. In terms of biological role, f(1)F(0) ATP synthase produces ATP from ADP in the presence of a proton or sodium gradient. F-type ATPases consist of two structural domains, F(1) containing the extramembraneous catalytic core and F(0) containing the membrane proton channel, linked together by a central stalk and a peripheral stalk. During catalysis, ATP synthesis in the catalytic domain of F(1) is coupled via a rotary mechanism of the central stalk subunits to proton translocation. Component of the F(0) channel, it forms part of the peripheral stalk, linking F(1) to F(0). The sequence is that of ATP synthase subunit b from Citrobacter koseri (strain ATCC BAA-895 / CDC 4225-83 / SGSC4696).